We begin with the raw amino-acid sequence, 301 residues long: 1,5-anhydro-D-fructose reductase (301 aa).

Asp-35 contributes to the NADP(+) binding site. The active-site Proton donor is Tyr-40. His-102 is a binding site for substrate. NADP(+)-binding positions include Gln-175 and 246–258 (IPKS…IREN).

This sequence belongs to the aldo/keto reductase family. As to quaternary structure, monomer.

It is found in the cytoplasm. The catalysed reaction is 1,5-anhydro-D-glucitol + NADP(+) = 1,5-anhydro-D-fructose + NADPH + H(+). Inhibited by p-chloromercuribenzoic acid and alkyliodines. Its function is as follows. Catalyzes the NADPH-dependent reduction of 1,5-anhydro-D-fructose (AF) to 1,5-anhydro-D-glucitol. This Mus musculus (Mouse) protein is 1,5-anhydro-D-fructose reductase (Akr1e2).